We begin with the raw amino-acid sequence, 358 residues long: Protein RecA (358 aa).

Position 67–74 (67–74 (GPESSGKT)) interacts with ATP.

It belongs to the RecA family.

It is found in the cytoplasm. Functionally, can catalyze the hydrolysis of ATP in the presence of single-stranded DNA, the ATP-dependent uptake of single-stranded DNA by duplex DNA, and the ATP-dependent hybridization of homologous single-stranded DNAs. It interacts with LexA causing its activation and leading to its autocatalytic cleavage. This chain is Protein RecA, found in Xenorhabdus bovienii (Xenorhabdus nematophila subsp. bovienii).